We begin with the raw amino-acid sequence, 59 residues long: Large ribosomal subunit protein bL25 (59 aa).

The protein belongs to the bacterial ribosomal protein bL25 family.

This is Large ribosomal subunit protein bL25 (ctc) from Bacillus caldolyticus.